Reading from the N-terminus, the 615-residue chain is DNA mismatch repair protein MutL (615 aa).

Residues 363–397 (FAEPAAREPVAPRYTPAPASGSRPAAPWPNAQPGY) are disordered. Positions 364 to 391 (AEPAAREPVAPRYTPAPASGSRPAAPWP) are enriched in low complexity.

This sequence belongs to the DNA mismatch repair MutL/HexB family.

Its function is as follows. This protein is involved in the repair of mismatches in DNA. It is required for dam-dependent methyl-directed DNA mismatch repair. May act as a 'molecular matchmaker', a protein that promotes the formation of a stable complex between two or more DNA-binding proteins in an ATP-dependent manner without itself being part of a final effector complex. The chain is DNA mismatch repair protein MutL from Escherichia coli (strain ATCC 8739 / DSM 1576 / NBRC 3972 / NCIMB 8545 / WDCM 00012 / Crooks).